The following is a 358-amino-acid chain: Phospho-N-acetylmuramoyl-pentapeptide-transferase (358 aa).

Helical transmembrane passes span 3–23 (QILF…PALI), 54–74 (GVAI…IGIA), 84–104 (ALLV…DDFI), 114–134 (LTAA…GVLA), 156–176 (ITTV…VVVA), 187–207 (LDGL…IITF), 231–251 (LALV…WNAA), 255–275 (IFMG…LSIT), 283–303 (VVIG…VAVF), and 330–350 (VIIR…GLFY).

It belongs to the glycosyltransferase 4 family. MraY subfamily. Mg(2+) is required as a cofactor.

The protein localises to the cell membrane. It carries out the reaction UDP-N-acetyl-alpha-D-muramoyl-L-alanyl-gamma-D-glutamyl-meso-2,6-diaminopimeloyl-D-alanyl-D-alanine + di-trans,octa-cis-undecaprenyl phosphate = di-trans,octa-cis-undecaprenyl diphospho-N-acetyl-alpha-D-muramoyl-L-alanyl-D-glutamyl-meso-2,6-diaminopimeloyl-D-alanyl-D-alanine + UMP. It participates in cell wall biogenesis; peptidoglycan biosynthesis. In terms of biological role, catalyzes the initial step of the lipid cycle reactions in the biosynthesis of the cell wall peptidoglycan: transfers peptidoglycan precursor phospho-MurNAc-pentapeptide from UDP-MurNAc-pentapeptide onto the lipid carrier undecaprenyl phosphate, yielding undecaprenyl-pyrophosphoryl-MurNAc-pentapeptide, known as lipid I. The polypeptide is Phospho-N-acetylmuramoyl-pentapeptide-transferase (Nocardia farcinica (strain IFM 10152)).